The following is a 635-amino-acid chain: Chaperone protein HtpG (635 aa).

The a; substrate-binding stretch occupies residues 1 to 343 (MSVETQKETL…SNDLSLNVSR (343 aa)). A b region spans residues 344-560 (EILQKDPIID…EQDMGLQMRQ (217 aa)). Positions 561–635 (ILEASGQKVP…LNKLLVELSV (75 aa)) are c.

It belongs to the heat shock protein 90 family. Homodimer.

It is found in the cytoplasm. Its function is as follows. Molecular chaperone. Has ATPase activity. In Pseudomonas syringae pv. tomato (strain ATCC BAA-871 / DC3000), this protein is Chaperone protein HtpG.